The primary structure comprises 444 residues: Nuclear envelope integral membrane protein 1 (444 aa).

Residues Met1–Ala43 form the signal peptide. N-linked (GlcNAc...) asparagine glycosylation occurs at Asn125. Helical transmembrane passes span Pro161–Ser181, Phe186–Ile206, Pro216–Phe236, Cys245–Cys265, and Leu289–Ala309. An a; required for its colocalization with lamins at the nuclear envelope region spans residues Phe186–Gln297. The tract at residues Pro336–Glu405 is b; required for interaction with RAN-GTP. The tract at residues Pro336 to Thr444 is required for nuclear localization. 3 positions are modified to phosphoserine: Ser368, Ser424, and Ser425.

It belongs to the NEMP family. Homooligomer. Interacts with RAN-GTP. Interacts with EMD. Post-translationally, phosphorylation may regulate its interaction with RAN-GTP.

The protein localises to the nucleus inner membrane. It is found in the nucleus envelope. Its function is as follows. Together with EMD, contributes to nuclear envelope stiffness in germ cells. Required for female fertility. Essential for normal erythropoiesis. Required for efficient nuclear envelope opening and enucleation during the late stages of erythroblast maturation. This chain is Nuclear envelope integral membrane protein 1 (NEMP1), found in Homo sapiens (Human).